A 505-amino-acid chain; its full sequence is Lysine--tRNA ligase (505 aa).

Residues Glu-415 and Glu-422 each coordinate Mg(2+).

The protein belongs to the class-II aminoacyl-tRNA synthetase family. In terms of assembly, homodimer. Mg(2+) is required as a cofactor.

It localises to the cytoplasm. It catalyses the reaction tRNA(Lys) + L-lysine + ATP = L-lysyl-tRNA(Lys) + AMP + diphosphate. This chain is Lysine--tRNA ligase, found in Yersinia enterocolitica serotype O:8 / biotype 1B (strain NCTC 13174 / 8081).